We begin with the raw amino-acid sequence, 230 residues long: Orotidine 5'-phosphate decarboxylase (230 aa).

Residues Asp-8, Lys-30, 59–68, Thr-118, Arg-178, Gln-187, Gly-207, and Arg-208 contribute to the substrate site; that span reads DLKLYDIPNT. Lys-61 acts as the Proton donor in catalysis.

This sequence belongs to the OMP decarboxylase family. Type 1 subfamily. Homodimer.

The enzyme catalyses orotidine 5'-phosphate + H(+) = UMP + CO2. It participates in pyrimidine metabolism; UMP biosynthesis via de novo pathway; UMP from orotate: step 2/2. Its function is as follows. Catalyzes the decarboxylation of orotidine 5'-monophosphate (OMP) to uridine 5'-monophosphate (UMP). This Sulfurovum sp. (strain NBC37-1) protein is Orotidine 5'-phosphate decarboxylase.